Here is a 368-residue protein sequence, read N- to C-terminus: Mitogen-activated protein kinase KSS1 (368 aa).

In terms of domain architecture, Protein kinase spans 13-313 (YKLVDLIGEG…AAEALRHPYL (301 aa)). ATP contacts are provided by residues 19–27 (IGEGAYGTV) and lysine 42. The active-site Proton acceptor is the aspartate 143. At threonine 183 the chain carries Phosphothreonine. The TXY signature appears at 183–185 (TEY). At tyrosine 185 the chain carries Phosphotyrosine.

This sequence belongs to the protein kinase superfamily. Ser/Thr protein kinase family. MAP kinase subfamily. HOG1 sub-subfamily. In terms of assembly, in the nucleus, KSS1 forms a complex with DIG1, DIG2 and STE12; in contrast to FUS3 the interaction of KSS1 with STE12 does not depend on DIG1 and DIG2. Phosphorylated KSS1 shows reduced interaction with STE12. During pheromone activation and phosphorylation, KSS1 forms a membrane-associated complex with the scaffold protein STE5, the MAPKK STE7, the MAPKKK STE11, and the G-protein beta subunit GBB/STE4; interacting directly with POF1, STE7 and STE5 proteins. Mg(2+) is required as a cofactor. Post-translationally, dually phosphorylated on Thr-183 and Tyr-185 by STE7 in response to pheromone or carbon/nitrogen limitation, which activates the enzyme. Activated FUS3 down-regulates KSS1 phosphorylation.

It localises to the nucleus. It is found in the cytoplasm. The protein localises to the periplasm. It catalyses the reaction L-seryl-[protein] + ATP = O-phospho-L-seryl-[protein] + ADP + H(+). The catalysed reaction is L-threonyl-[protein] + ATP = O-phospho-L-threonyl-[protein] + ADP + H(+). Its activity is regulated as follows. Activated by tyrosine and threonine phosphorylation after pheromone treatment or carbon/nitrogen limitation. In terms of biological role, together with closely related FUS3, KSS1 is the final kinase in the signal transduction cascade regulating activation/repression of the mating and filamentation pathways, induced by pheromone and nitrogen/carbon limitation, respectively. Phosphorylated KSS1 activates both pathways, whereas activated FUS3 activates the mating but suppresses the filamentation pathway. KSS1 activity is down-regulated by FUS3 during pheromone induction to prevent inappropriate activation of the filamentation pathway. During induction of filamentation, KSS1 activates the transcription factor STE12 resulting in its binding to and activation of filamentation specific genes. Non-activated KSS1 has a kinase-independent repressive effect on STE12 transcriptional activity, that is mediated by direct binding to STE12 and depends on the presence of DIG1 and DIG2, and that is required for the suppression of filamentation under normal growth conditions. SSN3/SRB10 contributes further to the suppression of filamentation under these conditions by reducing STE12 stability independent of KSS1. FUS3 can partially compensate for the lack of KSS1 but filamentation becomes constitutively induced at a low level in the absence of any signal. KSS1 phosphorylates STE7, STE5, FAR1, DIG1, DIG2, STE12, and SST2. In Saccharomyces cerevisiae (strain ATCC 204508 / S288c) (Baker's yeast), this protein is Mitogen-activated protein kinase KSS1 (KSS1).